Consider the following 134-residue polypeptide: Inner membrane protein YqjE (134 aa).

Topologically, residues 1-55 (MADTHHAQGPGKSVLGIGQRIVSIMVEMVETRLRLAVVELEEEKANLFQLLLMLG) are cytoplasmic. Residues 56 to 76 (LTMLFAAFGLMSLMVLIIWAV) traverse the membrane as a helical segment. Topologically, residues 77 to 83 (DPQYRLN) are periplasmic. Residues 84-104 (AMIATTVVLLLLALIGGIWTL) traverse the membrane as a helical segment. The Cytoplasmic portion of the chain corresponds to 105–134 (RKSRKSTLLRHTRHELANDRQLLEEESREQ).

It is found in the cell inner membrane. In Escherichia coli O157:H7, this protein is Inner membrane protein YqjE (yqjE).